The sequence spans 1332 residues: MDFTQPKPATALCGVVSADGKIAYPPGVKEITDKITTDEMIKRLKMVVKTFMDMDQDSEDEKQQYLPLALHLASEFFLRNPNKDVRLLVACCLADIFRIYAPEAPYTSHDKLKDIFLFITRQLKGLEDTKSPQFNRYFYLLENLAWVKSYNICFELEDCNEIFIQLFRTLFSVINNSHNTKVQMHMLDLMSSIIMEGDGVTQELLDSILINLIPAHKNLNKQSFDLAKVLLKRTVQTIEACIANFFNQVLVLGRSSVSDLSEHVFDLIQELFAIDPQLLLSVMPQLEFKLKSNDGEERLAVVRLLAKLFGSKDSDLATQNRPLWQCFLGRFNDIHVPVRLESVKFASHCLMNHPDLAKDLTEYLKVRSHDPEEAIRHDVIVTIITAAKRDLALVNDQLLGFVRERTLDKRWRVRKEAMMGLAQLYKKYCLHGEAGKEAAEKVSWIKDKLLHIYYQNSIDDKLLVEKIFAQYLVPHNLETEERMKCLYYLYASLDPNAVKALNEMWKCQNMLRSHVRELLDLHKQPTSEANCSAMFGKLMTIAKNLPDPGKAQDFVKKFNQVLGDDEKLRSQLELLISPTCSCKQADVCVREIARKLANPKQPTNPFLEMVKFLLERIAPVHIDSEAISALVKLMNKSIEGTADDEEEGVSPDSAIRSGLELLKVLSFTHPTSFHSAETYESLLQCLRMEDDKVAEAAIQIFRNTGHKIETDLPQIRSTLIPILHQKAKRGTPHQAKQAVHCIHAIFSNKEVQLAQIFEPLSRSLNADVPEQLITPLVSLGHISMLAPDQFASPMKSVVANFIVKDLLMNDRSTGEKNGKLWSPDEEVSPEVLAKVYLLRLLVRWLLGMKNNQSKSANSTLRLLSAMLVSEGDLTEQKRISKSDMSRLRLAAGSAIMKLAQEPCYHEIITPEQFQLCALVINDECYQVRQIFAQKLHKALVKLLLPLEYMAIFALCAKDPVKERRAHARQCLLKNISIRREYIKQNPMATEKLLSLLPEYVVPYMIHLLAHDPDFTRSQDVDQLRDIKECLWFMLEVLMTKNENNSHAFMKKMAENIKLTRDAQSPDESKTNEKLYTVCDVALCVINSKSALCNADSPKDPVLPMKFFTQPEKDFCNDKSYISEETRVLLLTGKPKPTGVLGTVNKPLSATGRKPYVRSAGTETGSNINANSELSPSAGSRSREQSSEASETGVSENEENPVRIISVTPVKNIDTVKNKEINSDQSTQGNISSDRGKKRIVTAAGAENIQKPDEKVDESGPPAPSKPRRGRRPKSESQGNATKNDDLNKPVSKGRKRAAGSQESLEAGNAKAPKLQDGAKKAVPAERQIDLQR.

Position 1 is an N-acetylmethionine (M1). The stretch at A392–Y428 is one HEAT repeat. Position 1096 is a phosphoserine (S1096). The interval G1138–R1332 is disordered. Residue K1145 is modified to N6-acetyllysine. Over residues G1160–L1173 the composition is skewed to polar residues. 2 positions are modified to phosphoserine: S1174 and S1194. Residue T1207 is modified to Phosphothreonine. K1210 is modified (N6-acetyllysine). Polar residues predominate over residues S1222–S1232. N6-acetyllysine is present on K1288. S1303 bears the Phosphoserine mark. Positions D1316–R1332 are enriched in basic and acidic residues.

This sequence belongs to the PDS5 family. Interacts with the cohesin complex. Interacts with WAPL (via FGF motifs) or CDCA5 (via the FGF motif); the interaction is direct, cohesin-dependent and competitive. Interacts with SMC3. Interacts with TP63.

It localises to the nucleus. Functionally, probable regulator of sister chromatid cohesion in mitosis which may stabilize cohesin complex association with chromatin. May couple sister chromatid cohesion during mitosis to DNA replication. Cohesion ensures that chromosome partitioning is accurate in both meiotic and mitotic cells and plays an important role in DNA repair. This chain is Sister chromatid cohesion protein PDS5 homolog A (Pds5a), found in Mus musculus (Mouse).